Reading from the N-terminus, the 218-residue chain is Ribose-5-phosphate isomerase A (218 aa).

Residues 28–31 (TGST), 81–84 (DSAD), and 94–97 (KGGG) contribute to the substrate site. E103 (proton acceptor) is an active-site residue. K121 contributes to the substrate binding site.

It belongs to the ribose 5-phosphate isomerase family. Homodimer.

It catalyses the reaction aldehydo-D-ribose 5-phosphate = D-ribulose 5-phosphate. It participates in carbohydrate degradation; pentose phosphate pathway; D-ribose 5-phosphate from D-ribulose 5-phosphate (non-oxidative stage): step 1/1. Catalyzes the reversible conversion of ribose-5-phosphate to ribulose 5-phosphate. This chain is Ribose-5-phosphate isomerase A, found in Buchnera aphidicola subsp. Baizongia pistaciae (strain Bp).